A 36-amino-acid chain; its full sequence is Photosystem I reaction center subunit VIII (36 aa).

The helical transmembrane segment at 6-28 threads the bilayer; it reads FPSVLVPLVGLVFPAMAMASLSL.

Belongs to the PsaI family.

It is found in the plastid. It localises to the chloroplast thylakoid membrane. May help in the organization of the PsaL subunit. The sequence is that of Photosystem I reaction center subunit VIII from Panax ginseng (Korean ginseng).